Consider the following 462-residue polypeptide: Proline--tRNA ligase (462 aa).

Belongs to the class-II aminoacyl-tRNA synthetase family. ProS type 3 subfamily. Homodimer.

It localises to the cytoplasm. It carries out the reaction tRNA(Pro) + L-proline + ATP = L-prolyl-tRNA(Pro) + AMP + diphosphate. Catalyzes the attachment of proline to tRNA(Pro) in a two-step reaction: proline is first activated by ATP to form Pro-AMP and then transferred to the acceptor end of tRNA(Pro). The protein is Proline--tRNA ligase of Thermoplasma acidophilum (strain ATCC 25905 / DSM 1728 / JCM 9062 / NBRC 15155 / AMRC-C165).